The sequence spans 309 residues: Calcium homeostasis modulator protein 5 (309 aa).

Residues Met-1–Lys-15 lie on the Cytoplasmic side of the membrane. Residues Thr-16 to Val-37 traverse the membrane as a helical segment. Positions 32 and 37 each coordinate a 1,2-diacyl-sn-glycero-3-phosphate. Residues Ala-38 to Ile-45 lie on the Extracellular side of the membrane. 3 disulfide bridges follow: Cys-41/Cys-127, Cys-43/Cys-158, and Cys-142/Cys-149. The chain crosses the membrane as a helical span at residues Glu-46 to Asn-70. At Asn-71–Val-99 the chain is on the cytoplasmic side. The helical transmembrane segment at Leu-100 to Met-129 threads the bilayer. Position 121 (Asn-121) interacts with a 1,2-diacyl-sn-glycero-3-phosphate. At Ser-130–Ser-174 the chain is on the extracellular side. Residues Leu-175 to Tyr-200 traverse the membrane as a helical segment. Residues Ala-201–Leu-309 lie on the Cytoplasmic side of the membrane. Arg-202 contributes to the a 1,2-diacyl-sn-glycero-3-phosphate binding site.

Belongs to the CALHM family. Oligomerizes to form undecameric cone-shaped channels.

Its subcellular location is the membrane. Functionally, may assemble to form large pore channels with gating and ion conductance likely regulated by membrane lipids. In Rattus norvegicus (Rat), this protein is Calcium homeostasis modulator protein 5.